The sequence spans 395 residues: Obg-like ATPase 1 (395 aa).

Positions 22 to 280 constitute an OBG-type G domain; it reads LKVGILGLPN…MPEDERQKYL (259 aa). 31-36 contacts ATP; sequence NVGKST. Residues serine 35 and threonine 55 each coordinate Mg(2+). Residue leucine 228 coordinates ATP. A TGS domain is found at 301–384; sequence QLEYFFTSGE…QDGDVIFFKF (84 aa).

This sequence belongs to the TRAFAC class OBG-HflX-like GTPase superfamily. OBG GTPase family. YchF/OLA1 subfamily. Monomer. Mg(2+) is required as a cofactor. Expressed in the nervous system, pharyngeal muscles and intestine (at protein level).

It is found in the cytoplasm. Hydrolyzes ATP, and can also hydrolyze GTP with lower efficiency. Has lower affinity for GTP. Plays a role in regulating starvation-induced thermotaxis responses in AFD thermosensory neurons. This is Obg-like ATPase 1 from Caenorhabditis elegans.